The following is a 377-amino-acid chain: Probable G-protein coupled receptor 27 (377 aa).

The Extracellular segment spans residues 1–24; that stretch reads MANASEPGGGGGGAEAAALGLRLA. Asn3 is a glycosylation site (N-linked (GlcNAc...) asparagine). The helical transmembrane segment at 25 to 45 threads the bilayer; that stretch reads TLSLLLCVSLAGNVLFALLIV. The Cytoplasmic portion of the chain corresponds to 46 to 56; it reads RERSLHRAPYY. The helical transmembrane segment at 57-77 threads the bilayer; it reads LLLDLCLADGLRALACLPAVM. The Extracellular segment spans residues 78-98; it reads LAARRAAAAAGTPPGALGCKL. A disulfide bond links Cys96 and Cys173. A helical transmembrane segment spans residues 99-119; it reads LAFLAALFCFHAAFLLLGVGV. Residues 120-140 lie on the Cytoplasmic side of the membrane; sequence TRYLAIAHHRFYAERLAGWPC. The helical transmembrane segment at 141-161 threads the bilayer; it reads AAMLVCAAWALALAAAFPPVL. The Extracellular portion of the chain corresponds to 162 to 183; sequence DGGGADDEDAPCALEQRPDGAP. The helical transmembrane segment at 184–204 threads the bilayer; it reads GALGFLLLLAAVVGATHLVYL. At 205–287 the chain is on the cytoplasmic side; the sequence is RLLFFIHDRR…FKTEKRLCKM (83 aa). The chain crosses the membrane as a helical span at residues 288–308; the sequence is FYAITLLFLLLWGPYVVASYL. Topologically, residues 309–322 are extracellular; that stretch reads RVLVRPGAVPQAYL. A helical membrane pass occupies residues 323-343; that stretch reads TASVWLTFAQAGINPVVCFLF. Residues 344-377 are Cytoplasmic-facing; that stretch reads NRELRDCFRAQFPCCQSPQATQATLPCDLKGIGL.

It belongs to the G-protein coupled receptor 1 family. In terms of tissue distribution, expressed as a 3.0 kb transcript, in whole brain, hippocampus, striatum, frontal cortex, thalamus, pons and hypothalamus. A lower molecular weight transcript was detected in all regions examined, except the hypothalamus.

Its subcellular location is the cell membrane. Its function is as follows. Orphan receptor. Possible candidate for amine-like G-protein coupled receptor. The sequence is that of Probable G-protein coupled receptor 27 (Gpr27) from Rattus norvegicus (Rat).